Reading from the N-terminus, the 227-residue chain is Cytochrome c oxidase subunit 2 (227 aa).

At 1-14 (MAYPLQLGLQDATS) the chain is on the mitochondrial intermembrane side. Residues 15–45 (PIMEELTSFHDHTLMIVFLISSLVLYIISSM) form a helical membrane-spanning segment. Residues 46 to 59 (LTTKMTHTNTMDAQ) are Mitochondrial matrix-facing. The helical transmembrane segment at 60 to 87 (GVETIWTILPAAILVLIALPSLRILYMM) threads the bilayer. At 88–227 (DEINNPALTV…HFENWSASMI (140 aa)) the chain is on the mitochondrial intermembrane side. Cu cation-binding residues include His-161, Cys-196, Glu-198, Cys-200, His-204, and Met-207. Glu-198 is a binding site for Mg(2+).

The protein belongs to the cytochrome c oxidase subunit 2 family. In terms of assembly, component of the cytochrome c oxidase (complex IV, CIV), a multisubunit enzyme composed of 14 subunits. The complex is composed of a catalytic core of 3 subunits MT-CO1, MT-CO2 and MT-CO3, encoded in the mitochondrial DNA, and 11 supernumerary subunits COX4I, COX5A, COX5B, COX6A, COX6B, COX6C, COX7A, COX7B, COX7C, COX8 and NDUFA4, which are encoded in the nuclear genome. The complex exists as a monomer or a dimer and forms supercomplexes (SCs) in the inner mitochondrial membrane with NADH-ubiquinone oxidoreductase (complex I, CI) and ubiquinol-cytochrome c oxidoreductase (cytochrome b-c1 complex, complex III, CIII), resulting in different assemblies (supercomplex SCI(1)III(2)IV(1) and megacomplex MCI(2)III(2)IV(2)). Found in a complex with TMEM177, COA6, COX18, COX20, SCO1 and SCO2. Interacts with TMEM177 in a COX20-dependent manner. Interacts with COX20. Interacts with COX16. Cu cation serves as cofactor.

The protein resides in the mitochondrion inner membrane. It catalyses the reaction 4 Fe(II)-[cytochrome c] + O2 + 8 H(+)(in) = 4 Fe(III)-[cytochrome c] + 2 H2O + 4 H(+)(out). In terms of biological role, component of the cytochrome c oxidase, the last enzyme in the mitochondrial electron transport chain which drives oxidative phosphorylation. The respiratory chain contains 3 multisubunit complexes succinate dehydrogenase (complex II, CII), ubiquinol-cytochrome c oxidoreductase (cytochrome b-c1 complex, complex III, CIII) and cytochrome c oxidase (complex IV, CIV), that cooperate to transfer electrons derived from NADH and succinate to molecular oxygen, creating an electrochemical gradient over the inner membrane that drives transmembrane transport and the ATP synthase. Cytochrome c oxidase is the component of the respiratory chain that catalyzes the reduction of oxygen to water. Electrons originating from reduced cytochrome c in the intermembrane space (IMS) are transferred via the dinuclear copper A center (CU(A)) of subunit 2 and heme A of subunit 1 to the active site in subunit 1, a binuclear center (BNC) formed by heme A3 and copper B (CU(B)). The BNC reduces molecular oxygen to 2 water molecules using 4 electrons from cytochrome c in the IMS and 4 protons from the mitochondrial matrix. The protein is Cytochrome c oxidase subunit 2 (MT-CO2) of Acomys ignitus (Fiery spiny mouse).